The sequence spans 128 residues: MPTINQLVRKERKKVLEKSKSPALKNCPQRRGVCTRVYTTTPKKPNSALRKVAKVRLTSGFEVISYIGGEGHNLQEHSIVLVRGGRVKDLPGVKYHIVRGALDTAGVAKRTVSRSKYGAKRPKAGTAK.

Aspartate 89 carries the post-translational modification 3-methylthioaspartic acid.

The protein belongs to the universal ribosomal protein uS12 family. As to quaternary structure, part of the 30S ribosomal subunit. Contacts proteins S8 and S17. May interact with IF1 in the 30S initiation complex.

Functionally, with S4 and S5 plays an important role in translational accuracy. In terms of biological role, interacts with and stabilizes bases of the 16S rRNA that are involved in tRNA selection in the A site and with the mRNA backbone. Located at the interface of the 30S and 50S subunits, it traverses the body of the 30S subunit contacting proteins on the other side and probably holding the rRNA structure together. The combined cluster of proteins S8, S12 and S17 appears to hold together the shoulder and platform of the 30S subunit. The protein is Small ribosomal subunit protein uS12 of Campylobacter jejuni subsp. jejuni serotype O:6 (strain 81116 / NCTC 11828).